A 156-amino-acid chain; its full sequence is Small ribosomal subunit protein uS7 (156 aa).

This sequence belongs to the universal ribosomal protein uS7 family. Part of the 30S ribosomal subunit. Contacts proteins S9 and S11.

In terms of biological role, one of the primary rRNA binding proteins, it binds directly to 16S rRNA where it nucleates assembly of the head domain of the 30S subunit. Is located at the subunit interface close to the decoding center, probably blocks exit of the E-site tRNA. This Pectobacterium atrosepticum (strain SCRI 1043 / ATCC BAA-672) (Erwinia carotovora subsp. atroseptica) protein is Small ribosomal subunit protein uS7.